The primary structure comprises 211 residues: MTRVALTSAVNLAKKLQDAGIRNPAVLKAISQTPRELFLDNALAHKAYENTALPIGQGQTISQPYIVARMTELLLQHQPQKVLEVGTGSGYQAAILAQLVPELCTVERIKALQIQARQRLKRLDLHNVSFKYGDGWQGWLNRSPYNGIMVTAAAAKIPEALLSQLAEGGVLIIPVGEETQQLMRITRHSDRFSSEVIETVKFVPLVNGELA.

The active site involves S62.

It belongs to the methyltransferase superfamily. L-isoaspartyl/D-aspartyl protein methyltransferase family.

Its subcellular location is the cytoplasm. The enzyme catalyses [protein]-L-isoaspartate + S-adenosyl-L-methionine = [protein]-L-isoaspartate alpha-methyl ester + S-adenosyl-L-homocysteine. Its function is as follows. Catalyzes the methyl esterification of L-isoaspartyl residues in peptides and proteins that result from spontaneous decomposition of normal L-aspartyl and L-asparaginyl residues. It plays a role in the repair and/or degradation of damaged proteins. The protein is Protein-L-isoaspartate O-methyltransferase of Shewanella oneidensis (strain ATCC 700550 / JCM 31522 / CIP 106686 / LMG 19005 / NCIMB 14063 / MR-1).